A 483-amino-acid polypeptide reads, in one-letter code: Trigger factor (483 aa).

The PPIase FKBP-type domain maps to 166–251 (TDTVNIDYVG…INDVFTKEKP (86 aa)). The segment covering 435-460 (GEEPKLSTTKKVVEPTEEKTRKDSKM) has biased composition (basic and acidic residues). Positions 435–483 (GEEPKLSTTKKVVEPTEEKTRKDSKMSTKKPAAKPAAKPAAATKKPVKK) are disordered. Positions 467 to 483 (AKPAAKPAAATKKPVKK) are enriched in low complexity.

It belongs to the FKBP-type PPIase family. Tig subfamily.

The protein resides in the cytoplasm. The catalysed reaction is [protein]-peptidylproline (omega=180) = [protein]-peptidylproline (omega=0). Its function is as follows. Involved in protein export. Acts as a chaperone by maintaining the newly synthesized protein in an open conformation. Functions as a peptidyl-prolyl cis-trans isomerase. The chain is Trigger factor from Mycoplasma mobile (strain ATCC 43663 / 163K / NCTC 11711) (Mesomycoplasma mobile).